A 448-amino-acid polypeptide reads, in one-letter code: MANPLPVSEVVRYVKRQLDDDVLLRQVAVIGEISNFKRYSSGHCYFTLKDDASRMKAVMFSRDAKQLQFEPKDGMKVIAVSKVTMYEATGDVQLYVELMRQDGIGLLFERYEARKRELEEMGWFDDERKKPLPMFPERVGIVTSPKGAALHDIATTLRRRAPHVAITFAPVAVQGEMAAPQVASAIRWMNERTDCDVLIVGRGGGSIEELWAFNEDVVVEAIYASTIPIISAVGHETDFTLSDFVADVRAATPTAAAELATAMIDAQRKDVERLDNHLHKAVRSQLDESRSRVERMINSYGLKSPRYTISQKRERFAQSEIRLEQGMRRHLTQATHQLRQLSQQLDVKRFSKTLSKQGDEVNHMVERLRRTRPLEQATLQFAQQVGRLHAVSPLAVLSRGYTFIEQDGAYVQNVKQLRDGDVSIRFRDGHAIAEVKERIVGDEERTDI.

Belongs to the XseA family. Heterooligomer composed of large and small subunits.

It is found in the cytoplasm. The catalysed reaction is Exonucleolytic cleavage in either 5'- to 3'- or 3'- to 5'-direction to yield nucleoside 5'-phosphates.. Bidirectionally degrades single-stranded DNA into large acid-insoluble oligonucleotides, which are then degraded further into small acid-soluble oligonucleotides. In Exiguobacterium sp. (strain ATCC BAA-1283 / AT1b), this protein is Exodeoxyribonuclease 7 large subunit.